The chain runs to 152 residues: Transcriptional regulator MraZ (152 aa).

SpoVT-AbrB domains lie at 5-52 (ANAI…PLNE) and 81-124 (ATES…DEDM).

The protein belongs to the MraZ family. Forms oligomers.

It is found in the cytoplasm. The protein resides in the nucleoid. This Psychromonas ingrahamii (strain DSM 17664 / CCUG 51855 / 37) protein is Transcriptional regulator MraZ.